A 225-amino-acid polypeptide reads, in one-letter code: UPF0758 protein Sden_0326 (225 aa).

The MPN domain occupies 102–224 (ILTNPDLTRD…IVSFAERGWL (123 aa)). Zn(2+) contacts are provided by H173, H175, and D186. The short motif at 173-186 (HNHPSGIAEPSQAD) is the JAMM motif element.

This sequence belongs to the UPF0758 family.

This chain is UPF0758 protein Sden_0326, found in Shewanella denitrificans (strain OS217 / ATCC BAA-1090 / DSM 15013).